The chain runs to 751 residues: Centrosomal protein of 68 kDa (751 aa).

2 stretches are compositionally biased toward basic and acidic residues: residues 1–17 (MALGEEKAEAEASEDTK) and 86–96 (ASREPVAERSE). The disordered stretch occupies residues 1-253 (MALGEEKAEA…PQPVFSGGDA (253 aa)). Composition is skewed to polar residues over residues 131-144 (LPQTPSLPRTTTIC) and 163-175 (APSSGLSCLSQWK). A compositionally biased stretch (low complexity) spans 176-200 (SMPSPGSAAPQPSSCSVSASSTGSS). Residue serine 326 is modified to Phosphoserine. The span at 339-348 (STLKSPTNVF) shows a compositional bias: polar residues. Disordered regions lie at residues 339–474 (STLK…ESDD), 511–545 (SPLEVSDTDGPASLPSSSSQSQLPPGAALRGSGDP), and 590–611 (RLDRWPFSDPDAEGQLPRKGGE). 2 stretches are compositionally biased toward basic and acidic residues: residues 399–416 (GSRDARWECREPALRGAK) and 433–450 (RTRDRGWPSPRPEREKRT). Residues 451 to 461 (SQSARRPTCTE) show a composition bias toward polar residues. Phosphoserine occurs at positions 466 and 472. Residues 520 to 537 (GPASLPSSSSQSQLPPGA) show a composition bias toward low complexity.

In terms of assembly, interacts with CNTLN; the interaction recruits CEP68 to the centrosome. Interacts with the SCF(FBXW11) complex which contains SKP1, CUL1 and FBXW11; the interaction is probably mediated by FBXW11 and the complex also contains CDK5RAP2 and PCNT. Also interacts with F-box protein BTRC. Interacts with serine/threonine-protein kinase PLK1; the interaction leads to phosphorylation of CEP68 and its subsequent degradation. Interacts with NEK2; the interaction leads to phosphorylation of CEP68. In terms of processing, phosphorylation by PLK1 is required for binding to BTRC in prometaphase. Phosphorylated directly or indirectly by NEK2. NEK2-mediated phosphorylation promotes CEP68 dissociation from the centrosome and its degradation at the onset of mitosis. Post-translationally, ubiquitinated and targeted for proteasomal degradation in early mitosis by the SCF(BTRC) and/or SCF(FBXW11) E3 ubiquitin-protein ligase complexes. Degradation is complete by prometaphase and is required for removal of CDK5RAP2 from the peripheral pericentriolar material and subsequent centriole separation.

It is found in the cytoplasm. Its subcellular location is the cytoskeleton. It localises to the microtubule organizing center. The protein localises to the centrosome. Involved in maintenance of centrosome cohesion, probably as part of a linker structure which prevents centrosome splitting. Required for localization of CDK5RAP2 to the centrosome during interphase. Contributes to CROCC/rootletin filament formation. The chain is Centrosomal protein of 68 kDa (CEP68) from Pongo abelii (Sumatran orangutan).